An 827-amino-acid chain; its full sequence is Protein arginine N-methyltransferase 9 (827 aa).

2 TPR repeats span residues 54–87 (QYSLFKWAEELYALNRSQDLFNCYEQALELFPID) and 88–121 (DVICNSMGEHLFRLGFRDEAAGYFYKALKLNPSS). 2 consecutive SAM-dependent MTase PRMT-type domains span residues 124 to 453 (AKEN…YLRL) and 511 to 827 (NAVY…RPLQ).

The protein belongs to the class I-like SAM-binding methyltransferase superfamily. Protein arginine N-methyltransferase family.

It is found in the cytoplasm. It catalyses the reaction L-arginyl-[protein] + 2 S-adenosyl-L-methionine = N(omega),N(omega)'-dimethyl-L-arginyl-[protein] + 2 S-adenosyl-L-homocysteine + 2 H(+). Arginine methyltransferase that can both catalyze the formation of omega-N monomethylarginine (MMA) and symmetrical dimethylarginine (sDMA). This Xenopus laevis (African clawed frog) protein is Protein arginine N-methyltransferase 9 (prmt9).